Consider the following 62-residue polypeptide: Large ribosomal subunit protein eL37 (62 aa).

Cys20, Cys23, Cys35, and Cys38 together coordinate Zn(2+). The segment at 20–38 (CRRCGRRSYHVRKKACSAC) adopts a C4-type zinc-finger fold.

The protein belongs to the eukaryotic ribosomal protein eL37 family. It depends on Zn(2+) as a cofactor.

Its function is as follows. Binds to the 23S rRNA. The polypeptide is Large ribosomal subunit protein eL37 (Methanococcus aeolicus (strain ATCC BAA-1280 / DSM 17508 / OCM 812 / Nankai-3)).